A 103-amino-acid polypeptide reads, in one-letter code: Small ribosomal subunit protein uS10 (103 aa).

The protein belongs to the universal ribosomal protein uS10 family. Part of the 30S ribosomal subunit.

In terms of biological role, involved in the binding of tRNA to the ribosomes. The polypeptide is Small ribosomal subunit protein uS10 (Shewanella frigidimarina (strain NCIMB 400)).